Consider the following 261-residue polypeptide: Proteasome subunit alpha type-4 (261 aa).

Residues Ser13 and Ser75 each carry the phosphoserine modification. Lys127 carries the N6-acetyllysine modification. Residue Ser173 is modified to Phosphoserine. Lys176 is modified (N6-acetyllysine). The disordered stretch occupies residues 240-261 (HEEEEAKAEREKKEKEQKEKDK).

This sequence belongs to the peptidase T1A family. As to quaternary structure, the 26S proteasome consists of a 20S proteasome core and two 19S regulatory subunits. The 20S proteasome core is a barrel-shaped complex made of 28 subunits that are arranged in four stacked rings. The two outer rings are each formed by seven alpha subunits, and the two inner rings are formed by seven beta subunits. The proteolytic activity is exerted by three beta-subunits PSMB5, PSMB6 and PSMB7.

It is found in the cytoplasm. It localises to the nucleus. Its function is as follows. Component of the 20S core proteasome complex involved in the proteolytic degradation of most intracellular proteins. This complex plays numerous essential roles within the cell by associating with different regulatory particles. Associated with two 19S regulatory particles, forms the 26S proteasome and thus participates in the ATP-dependent degradation of ubiquitinated proteins. The 26S proteasome plays a key role in the maintenance of protein homeostasis by removing misfolded or damaged proteins that could impair cellular functions, and by removing proteins whose functions are no longer required. Associated with the PA200 or PA28, the 20S proteasome mediates ubiquitin-independent protein degradation. This type of proteolysis is required in several pathways including spermatogenesis (20S-PA200 complex) or generation of a subset of MHC class I-presented antigenic peptides (20S-PA28 complex). The protein is Proteasome subunit alpha type-4 (PSMA4) of Macaca fascicularis (Crab-eating macaque).